The sequence spans 233 residues: MGKHIIPQRRGHGSLVYRSPSHRHITEVKHVDQGTYVIKDIIHAPGRNAPLLELMGSDGKKAYQIAFTGAFVGQNIVAGNVDSVSPGTTTVLANIPDGSYVYNIESSPGDGGEFCRSAGTFALVVSHGQHVTLKLPSGRMRDFDPRCRATLGVVAASGIKDPPILKAGTHVHYLRSKAKRPYTVRGVAMNAVNHPHGGGNHQHVGRPSTVGRNAPPGRKVGRLSPKRRRVNGR.

The segment at Pro195 to Arg233 is disordered. Residues Lys219–Arg233 show a composition bias toward basic residues.

Belongs to the universal ribosomal protein uL2 family. Part of the 50S ribosomal subunit. Forms a bridge to the 30S subunit in the 70S ribosome.

In terms of biological role, one of the primary rRNA binding proteins. Required for association of the 30S and 50S subunits to form the 70S ribosome, for tRNA binding and peptide bond formation. It has been suggested to have peptidyltransferase activity; this is somewhat controversial. Makes several contacts with the 16S rRNA in the 70S ribosome. This chain is Large ribosomal subunit protein uL2, found in Thermoplasma acidophilum (strain ATCC 25905 / DSM 1728 / JCM 9062 / NBRC 15155 / AMRC-C165).